The primary structure comprises 135 residues: Histone H1, macronuclear (135 aa).

A compositionally biased stretch (low complexity) spans 1 to 17 (MPAKTATAVKRTTTTKK). The tract at residues 1–135 (MPAKTATAVK…GGKKKSAKKN (135 aa)) is disordered. 2 stretches are compositionally biased toward basic residues: residues 18–54 (SAAK…RRTP) and 62–79 (KATK…RSAT). Low complexity predominate over residues 80–112 (KKTTAAPAAAAAPATDAPAAAATPSKATGSAKK). Residues 113-135 (ASARKSSAKKPAKGGKKKSAKKN) show a composition bias toward basic residues.

The protein resides in the nucleus. It is found in the chromosome. Histones H1 are necessary for the condensation of nucleosome chains into higher-order structures. This chain is Histone H1, macronuclear, found in Euplotes eurystomus (Ciliate).